We begin with the raw amino-acid sequence, 259 residues long: Insulin-like growth factor-binding protein 1 (259 aa).

The first 25 residues, 1-25 (MSEVPVARVWLVLLLLTVQVGVTAG), serve as a signal peptide directing secretion. In terms of domain architecture, IGFBP N-terminal spans 26–107 (APWQCAPCSA…TRGQGACVQE (82 aa)). Disulfide bonds link Cys30/Cys57, Cys33/Cys59, Cys41/Cys60, Cys48/Cys63, Cys71/Cys84, and Cys78/Cys104. Ser45 bears the Phosphoserine; by FAM20C mark. Ser120, Ser123, Ser126, and Ser144 each carry phosphoserine. Ser156 is subject to Phosphoserine; by FAM20C. Thr157 carries the post-translational modification Phosphothreonine; by FAM20C. Tyr158 is modified (phosphotyrosine). One can recognise a Thyroglobulin type-1 domain in the interval 173-251 (KEPCRIELYR…SPEIRGDPNC (79 aa)). 3 cysteine pairs are disulfide-bonded: Cys176/Cys206, Cys217/Cys228, and Cys230/Cys251. Phosphothreonine; by FAM20C is present on Thr193. Phosphoserine; by FAM20C occurs at positions 194 and 199. Ser242 bears the Phosphoserine; by FAM20C mark. The Cell attachment site signature appears at 246 to 248 (RGD).

Binds equally well IGF1 and IGF2. Interacts with integrin ITGA5:ITGB1. Interacts with VHL; this interaction inhibits HIF1A degradation. In terms of processing, phosphorylated; probably by casein kinase II. Phosphorylation alters the affinity of the protein for IGFs. In amniotic fluid, the unmodified protein is the most abundant form, while mono-, bi-, tri- and tetraphosphorylated forms are present in decreasing amounts. The phosphorylation state may influence the propensity to proteolysis.

It is found in the secreted. In terms of biological role, multifunctional protein that plays a critical role in regulating the availability of IGFs such as IGF1 and IGF2 to their receptors and thereby regulates IGF-mediated cellular processes including cell migration, proliferation, differentiation or apoptosis in a cell-type specific manner. Also plays a positive role in cell migration by interacting with integrin ITGA5:ITGB1 through its RGD motif. Mechanistically, binding to integrins leads to activation of focal adhesion kinase/PTK2 and stimulation of the mitogen-activated protein kinase (MAPK) pathway. Regulates cardiomyocyte apoptosis by suppressing HIF-1alpha/HIF1A ubiquitination and subsequent degradation. The chain is Insulin-like growth factor-binding protein 1 (IGFBP1) from Homo sapiens (Human).